The following is a 361-amino-acid chain: Free fatty acid receptor 4 (361 aa).

The Extracellular segment spans residues 1–45 (MSPECARAAGDAPLRSLEQANRTRFPFFSDVKGDHRLVLAAVETT). N-linked (GlcNAc...) asparagine glycosylation occurs at asparagine 21. Residues 46 to 66 (VLVLIFAVSLLGNVCALVLVA) traverse the membrane as a helical segment. At 67–77 (RRRRRGATACL) the chain is on the cytoplasmic side. A helical transmembrane segment spans residues 78–98 (VLNLFCADLLFISAIPLVLAV). Topologically, residues 99–112 (RWTEAWLLGPVACH) are extracellular. Residues cysteine 111 and cysteine 194 are joined by a disulfide bond. A helical membrane pass occupies residues 113 to 133 (LLFYVMTLSGSVTILTLAAVS). Residues 134–156 (LERMVCIVHLQRGVRGPGRRARA) lie on the Cytoplasmic side of the membrane. A helical membrane pass occupies residues 157-177 (VLLALIWGYSAVAALPLCVFF). At 178–204 (RVVPQRLPGADQEISICTLIWPTIPGE) the chain is on the extracellular side. A helical transmembrane segment spans residues 205-225 (ISWDVSFVTLNFLVPGLVIVI). At 226-268 (SYSKILQITKASRKRLTVSLAYSESHQIRVSQQDFRLFRTLFL) the chain is on the cytoplasmic side. The chain crosses the membrane as a helical span at residues 269 to 289 (LMVSFFIMWSPIIITILLILI). The Extracellular segment spans residues 290 to 295 (QNFKQD). A helical transmembrane segment spans residues 296 to 316 (LVIWPSLFFWVVAFTFANSAL). Over 317–361 (NPILYNMTLCRNEWKKIFCCFWFPEKGAILTDTSVKRNDLSIISG) the chain is Cytoplasmic. Phosphothreonine occurs at positions 347 and 349. 3 positions are modified to phosphoserine: serine 350, serine 357, and serine 360.

This sequence belongs to the G-protein coupled receptor 1 family. As to quaternary structure, interacts (via C-terminus) with ARRB2 following LCFAs stimulation. Post-translationally, phosphorylated at two clusters of Ser and Thr residues located in the intracellular C-terminus, a prerequisite for FFAR4 internalization via an ARRB2-dependent pathway. In terms of tissue distribution, the predominant isoform in human tissues. Expressed in adipose tissue, pancreatic islets, lung and brain. Expressed in alpha cells of pancreatic islets. Expressed in primary cilia of perivascular preadipocytes of white adipose tissue (at protein level). As to expression, abundant expression in the intestinal tract. Expressed in colonic intraepithelial neuroendocrine cells.

Its subcellular location is the cell membrane. It is found in the endosome membrane. The protein localises to the lysosome membrane. It localises to the cell projection. The protein resides in the cilium membrane. G-protein-coupled receptor for long-chain fatty acids (LCFAs) with a major role in adipogenesis, energy metabolism and inflammation. Signals via G-protein and beta-arrestin pathways. LCFAs sensing initiates activation of phosphoinositidase C-linked G proteins GNAQ and GNA11 (G(q)/G(11)), inducing a variety of cellular responses via second messenger pathways such as intracellular calcium mobilization, modulation of cyclic adenosine monophosphate (cAMP) production, and mitogen-activated protein kinases (MAPKs). After LCFAs binding, associates with beta-arrestin ARRB2 that acts as an adapter protein coupling the receptor to specific downstream signaling pathways, as well as mediating receptor endocytosis. In response to dietary fats, plays an important role in the regulation of adipocyte proliferation and differentiation. Acts as a receptor for omega-3 polyunsaturated fatty acids (PUFAs) at primary cilium of perivascular preadipocytes, initiating an adipogenic program via cAMP and CTCF-dependent chromatin remodeling that ultimately results in transcriptional activation of adipogenic genes and cell cycle entry. Induces differentiation of brown adipocytes probably via autocrine and endocrine functions of FGF21 hormone. Activates brown adipocytes by initiating intracellular calcium signaling that leads to mitochondrial depolarization and fission, and overall increased mitochondrial respiration. Consequently stimulates fatty acid uptake and oxidation in mitochondria together with UCP1-mediated thermogenic respiration, eventually reducing fat mass. Regulates bi-potential differentiation of bone marrow mesenchymal stem cells toward osteoblasts or adipocytes likely by up-regulating distinct integrins. In response to dietary fats regulates hormone secretion and appetite. Stimulates GIP and GLP1 secretion from enteroendocrine cells as well as GCG secretion in pancreatic alpha cells, thereby playing a role in the regulation of blood glucose levels. Negatively regulates glucose-induced SST secretion in pancreatic delta cells. Mediates LCFAs inhibition of GHRL secretion, an appetite-controlling hormone. In taste buds, contributes to sensing of dietary fatty acids by the gustatory system. During the inflammatory response, promotes anti-inflammatory M2 macrophage differentiation in adipose tissue. Mediates the anti-inflammatory effects of omega-3 PUFAs via inhibition of NLRP3 inflammasome activation. In this pathway, interacts with adapter protein ARRB2 and inhibits the priming step triggered by Toll-like receptors (TLRs) at the level of TAK1 and TAB1. Further inhibits the activation step when ARRB2 directly associates with NLRP3, leading to inhibition of pro-inflammatory cytokine release. Mediates LCFAs anti-apoptotic effects. Its function is as follows. Receptor for LCFAs decoupled from G-protein signaling. May signal through beta-arrestin pathway. After LCFAs binding, associates with beta-arrestin ARRB2 that may act as an adapter protein coupling the receptor to specific downstream signaling pathways, as well as mediating receptor endocytosis. This is Free fatty acid receptor 4 from Homo sapiens (Human).